A 154-amino-acid chain; its full sequence is MDFPQRVNGWALYAHPCFQETYDALVAEVEALKGKDPENYQRKAATKLLAVVHKVIEEHITVNPSSPAFRHGKSLGSGKNKDWSRVKFGAGRYRLFFRYSEKEKVIILGWMNDENTLRTYGKKTDAYTVFSKMLKRGHPPADWESLTQETEESH.

In terms of assembly, homohexamer; forms a complex with PrlF (SohA) with stoichiometry PrlF(2)-YhaV(4), possibly as a YhaV(2)-PrlF(2)-YhaV(2) complex like the MazFE complex. May dimerize in solution.

In terms of biological role, toxic component of a type II toxin-antitoxin (TA) system. Has RNase activity in vitro. Acts as a transcription factor. The YhaV/PrlF complex binds the prlF-yhaV operon, probably negatively regulating its expression. The polypeptide is Toxin YhaV (yhaV) (Escherichia coli O6:H1 (strain CFT073 / ATCC 700928 / UPEC)).